Consider the following 34-residue polypeptide: SCNLSTCATHNLVNELNKFDKSKPSSGGVGPESF.

Cysteine 2 and cysteine 7 form a disulfide bridge. Position 34 is a phenylalanine amide (phenylalanine 34).

This is Calcitonin-like peptide 2 from Odorrana schmackeri (Schmacker's frog).